The primary structure comprises 187 residues: Small ribosomal subunit protein uS7 (187 aa).

Belongs to the universal ribosomal protein uS7 family. As to quaternary structure, part of the 30S ribosomal subunit.

One of the primary rRNA binding proteins, it binds directly to 16S rRNA where it nucleates assembly of the head domain of the 30S subunit. Is located at the subunit interface close to the decoding center. The protein is Small ribosomal subunit protein uS7 of Methanosphaera stadtmanae (strain ATCC 43021 / DSM 3091 / JCM 11832 / MCB-3).